Reading from the N-terminus, the 208-residue chain is Small ribosomal subunit protein uS4 (208 aa).

The S4 RNA-binding domain occupies 98–161 (RRLDNVIYRL…RKIPVLAEAQ (64 aa)).

The protein belongs to the universal ribosomal protein uS4 family. Part of the 30S ribosomal subunit. Contacts protein S5. The interaction surface between S4 and S5 is involved in control of translational fidelity.

Functionally, one of the primary rRNA binding proteins, it binds directly to 16S rRNA where it nucleates assembly of the body of the 30S subunit. In terms of biological role, with S5 and S12 plays an important role in translational accuracy. This is Small ribosomal subunit protein uS4 from Nitratidesulfovibrio vulgaris (strain ATCC 29579 / DSM 644 / CCUG 34227 / NCIMB 8303 / VKM B-1760 / Hildenborough) (Desulfovibrio vulgaris).